Consider the following 439-residue polypeptide: Adenylosuccinate synthetase (439 aa).

GTP-binding positions include 14 to 20 (GDEGKGK) and 42 to 44 (GHT). Aspartate 15 (proton acceptor) is an active-site residue. Positions 15 and 42 each coordinate Mg(2+). IMP contacts are provided by residues 15-18 (DEGK), 40-43 (NAGH), threonine 130, arginine 144, glutamine 225, threonine 240, and arginine 304. The active-site Proton donor is the histidine 43. 300–306 (TTTGRRR) lines the substrate pocket. GTP contacts are provided by residues arginine 306, 332-334 (KLD), and 414-416 (SLG).

It belongs to the adenylosuccinate synthetase family. Homodimer. The cofactor is Mg(2+).

The protein resides in the cytoplasm. It catalyses the reaction IMP + L-aspartate + GTP = N(6)-(1,2-dicarboxyethyl)-AMP + GDP + phosphate + 2 H(+). The protein operates within purine metabolism; AMP biosynthesis via de novo pathway; AMP from IMP: step 1/2. In terms of biological role, plays an important role in the de novo pathway of purine nucleotide biosynthesis. Catalyzes the first committed step in the biosynthesis of AMP from IMP. This chain is Adenylosuccinate synthetase, found in Synechococcus sp. (strain CC9902).